The sequence spans 258 residues: NAD(P)H-hydrate epimerase (258 aa).

A YjeF N-terminal domain is found at 15–244 (AFQLDQELMS…RIAKEYGIED (230 aa)). 75-79 (NNGGD) is a (6S)-NADPHX binding site. The K(+) site is built by Asn76 and Asp145. (6S)-NADPHX-binding positions include 149 to 155 (GFSFKPP) and Asp181. Ser184 contributes to the K(+) binding site.

This sequence belongs to the NnrE/AIBP family. K(+) is required as a cofactor.

It is found in the cytoplasm. It localises to the mitochondrion. It catalyses the reaction (6R)-NADHX = (6S)-NADHX. It carries out the reaction (6R)-NADPHX = (6S)-NADPHX. In terms of biological role, catalyzes the epimerization of the S- and R-forms of NAD(P)HX, a damaged form of NAD(P)H that is a result of enzymatic or heat-dependent hydration. This is a prerequisite for the S-specific NAD(P)H-hydrate dehydratase to allow the repair of both epimers of NAD(P)HX. In Candida albicans (strain WO-1) (Yeast), this protein is NAD(P)H-hydrate epimerase.